Consider the following 663-residue polypeptide: Probable peptidyl-glycine alpha-amidating monooxygenase pamn-1 (663 aa).

An N-terminal signal peptide occupies residues 1 to 21 (MNDRISINLIYLVLTFCCVSA). The peptidylglycine alpha-hydroxylating monooxygenase stretch occupies residues 1–300 (MNDRISINLI…YDAKLDNPYP (300 aa)). The Cu(2+) site is built by histidine 75 and histidine 76. Residues cysteine 82 and cysteine 98 are joined by a disulfide bond. A Cu(2+)-binding site is contributed by histidine 142. N-linked (GlcNAc...) asparagine glycosylation occurs at asparagine 191. 2 disulfide bridges follow: cysteine 194–cysteine 305 and cysteine 261–cysteine 283. Cu(2+)-binding residues include histidine 210 and histidine 212. Residue asparagine 269 is glycosylated (N-linked (GlcNAc...) asparagine). Methionine 282 provides a ligand contact to Cu(2+). Positions 301 to 663 (QGAICAKDYP…WQFKIRHDQN (363 aa)) are peptidyl-alpha-hydroxyglycine alpha-amidating lyase. Position 376 (arginine 376) interacts with a protein. N-linked (GlcNAc...) asparagine glycosylation occurs at asparagine 411. 4 NHL repeats span residues 411–454 (NQTK…WKIE), 464–507 (SGEL…LDLN), 511–554 (IRQF…MTTQ), and 626–656 (FGQP…LWQF). Cysteine 478 and cysteine 497 are oxidised to a cystine. The a protein site is built by tyrosine 496 and arginine 543.

The protein in the C-terminal section; belongs to the peptidyl-alpha-hydroxyglycine alpha-amidating lyase family. In the N-terminal section; belongs to the copper type II ascorbate-dependent monooxygenase family. In terms of assembly, monomer. Zn(2+) is required as a cofactor. It depends on Cu(2+) as a cofactor.

It is found in the secreted. It carries out the reaction a [peptide]-C-terminal glycine + 2 L-ascorbate + O2 = a [peptide]-C-terminal (2S)-2-hydroxyglycine + 2 monodehydro-L-ascorbate radical + H2O. The catalysed reaction is a [peptide]-C-terminal (2S)-2-hydroxyglycine = a [peptide]-C-terminal amide + glyoxylate. Functionally, probable bifunctional enzyme that catalyzes 2 sequential steps in C-terminal alpha-amidation of peptides. The monooxygenase part produces an unstable peptidyl(2-hydroxyglycine) intermediate that is dismutated to glyoxylate and the corresponding desglycine peptide amide by the lyase part. C-terminal amidation of peptides such as neuropeptides is essential for full biological activity. The chain is Probable peptidyl-glycine alpha-amidating monooxygenase pamn-1 from Caenorhabditis elegans.